The chain runs to 102 residues: Small ribosomal subunit protein uS10 (102 aa).

This sequence belongs to the universal ribosomal protein uS10 family. As to quaternary structure, part of the 30S ribosomal subunit.

In terms of biological role, involved in the binding of tRNA to the ribosomes. In Cupriavidus metallidurans (strain ATCC 43123 / DSM 2839 / NBRC 102507 / CH34) (Ralstonia metallidurans), this protein is Small ribosomal subunit protein uS10.